A 574-amino-acid polypeptide reads, in one-letter code: Proline--tRNA ligase (574 aa).

The protein belongs to the class-II aminoacyl-tRNA synthetase family. ProS type 1 subfamily. Homodimer.

It is found in the cytoplasm. It carries out the reaction tRNA(Pro) + L-proline + ATP = L-prolyl-tRNA(Pro) + AMP + diphosphate. Its function is as follows. Catalyzes the attachment of proline to tRNA(Pro) in a two-step reaction: proline is first activated by ATP to form Pro-AMP and then transferred to the acceptor end of tRNA(Pro). As ProRS can inadvertently accommodate and process non-cognate amino acids such as alanine and cysteine, to avoid such errors it has two additional distinct editing activities against alanine. One activity is designated as 'pretransfer' editing and involves the tRNA(Pro)-independent hydrolysis of activated Ala-AMP. The other activity is designated 'posttransfer' editing and involves deacylation of mischarged Ala-tRNA(Pro). The misacylated Cys-tRNA(Pro) is not edited by ProRS. In Aeromonas hydrophila subsp. hydrophila (strain ATCC 7966 / DSM 30187 / BCRC 13018 / CCUG 14551 / JCM 1027 / KCTC 2358 / NCIMB 9240 / NCTC 8049), this protein is Proline--tRNA ligase.